A 199-amino-acid polypeptide reads, in one-letter code: ATP-dependent Clp protease proteolytic subunit (199 aa).

The active-site Nucleophile is the serine 98. Residue histidine 123 is part of the active site.

It belongs to the peptidase S14 family. As to quaternary structure, fourteen ClpP subunits assemble into 2 heptameric rings which stack back to back to give a disk-like structure with a central cavity, resembling the structure of eukaryotic proteasomes.

The protein localises to the cytoplasm. The catalysed reaction is Hydrolysis of proteins to small peptides in the presence of ATP and magnesium. alpha-casein is the usual test substrate. In the absence of ATP, only oligopeptides shorter than five residues are hydrolyzed (such as succinyl-Leu-Tyr-|-NHMec, and Leu-Tyr-Leu-|-Tyr-Trp, in which cleavage of the -Tyr-|-Leu- and -Tyr-|-Trp bonds also occurs).. Cleaves peptides in various proteins in a process that requires ATP hydrolysis. Has a chymotrypsin-like activity. Plays a major role in the degradation of misfolded proteins. The sequence is that of ATP-dependent Clp protease proteolytic subunit from Clostridium botulinum (strain Alaska E43 / Type E3).